The chain runs to 267 residues: 27 kDa primary mesenchyme-specific spicule protein (267 aa).

Positions 1-16 are cleaved as a signal peptide; sequence MKLLAILLVLPALCFG. Residues 20–64 are 11 X 4 AA tandem repeats of G-[PQ]-G-[MQ]; that stretch reads EGPGMGPGMGPGMGPGMGPGMGPGMGPGMGPGMGPGQGQGQGQGQ. Repeat copies occupy residues 21 to 24, 25 to 28, 29 to 32, 33 to 36, 37 to 40, 41 to 44, 45 to 48, 49 to 52, 53 to 56, 57 to 60, and 61 to 64. Residues 44 to 68 form a disordered region; the sequence is MGPGMGPGMGPGQGQGQGQGQGQVG. A C-type lectin domain is found at 79–220; sequence IGQQCFKMMS…CDEPMYFACS (142 aa). Intrachain disulfides connect cysteine 100–cysteine 219 and cysteine 197–cysteine 211.

Expressed specifically in the micromere/primary mesenchyme cells (PMC) lineage. Produced uniformly and exclusively by PMCs through the early prism stage and this specificity is further restricted during skeletogenesis to a subpopulation of PMCs associated with the growing tips of the spicules.

The protein localises to the secreted. In terms of biological role, may play a role in the regulation or execution of skeletal growth. The polypeptide is 27 kDa primary mesenchyme-specific spicule protein (PM27) (Strongylocentrotus purpuratus (Purple sea urchin)).